The primary structure comprises 448 residues: NADP-specific glutamate dehydrogenase (448 aa).

Substrate contacts are provided by Lys88, Gln109, and Lys112. Lys124 (proton donor) is an active-site residue. Gly163 provides a ligand contact to substrate. Residues Thr207 and Asn238 each contribute to the NADP(+) site. Residue Ser381 participates in substrate binding.

It belongs to the Glu/Leu/Phe/Val dehydrogenases family. In terms of assembly, homohexamer.

The enzyme catalyses L-glutamate + NADP(+) + H2O = 2-oxoglutarate + NH4(+) + NADPH + H(+). Its function is as follows. Catalyzes the reversible oxidative deamination of glutamate to alpha-ketoglutarate and ammonia. This is NADP-specific glutamate dehydrogenase (gdhA) from Helicobacter pylori (strain ATCC 700392 / 26695) (Campylobacter pylori).